The chain runs to 422 residues: Proline--tRNA ligase (422 aa).

It belongs to the class-II aminoacyl-tRNA synthetase family. ProS type 2 subfamily. In terms of assembly, homodimer.

Its subcellular location is the cytoplasm. It catalyses the reaction tRNA(Pro) + L-proline + ATP = L-prolyl-tRNA(Pro) + AMP + diphosphate. Its function is as follows. Catalyzes the attachment of proline to tRNA(Pro) in a two-step reaction: proline is first activated by ATP to form Pro-AMP and then transferred to the acceptor end of tRNA(Pro). In Wolbachia sp. subsp. Drosophila simulans (strain wRi), this protein is Proline--tRNA ligase.